A 543-amino-acid chain; its full sequence is Reticulophagy regulator 2 (543 aa).

The next 3 helical transmembrane spans lie at 12 to 32 (AGGG…SLGM), 100 to 120 (SLRP…LDLW), and 204 to 224 (VPGI…PLVV). Residues 254–265 (LHHKHDKRKRQG) are compositionally biased toward basic residues. Positions 254-287 (LHHKHDKRKRQGKNAPPGGDEPLAETESESEAEL) are disordered. Acidic residues predominate over residues 275–285 (PLAETESESEA). Phosphothreonine is present on threonine 279. Serine 281, serine 283, serine 291, and serine 311 each carry phosphoserine. Threonine 334 bears the Phosphothreonine mark. 2 disordered regions span residues 336-394 (VSED…DVAA) and 411-486 (HFNG…EEEA). A phosphoserine mark is found at serine 337, serine 344, serine 347, and serine 385. The segment covering 461 to 480 (APSPSILPPVPQDSPQPLPA) has biased composition (pro residues). Residues 490-495 (EDFELL) carry the LIR motif motif. The interval 504–543 (NAELGLEPETPPKPPDAPPLGPDIHSLVQSDQEAQAVAEP) is disordered. Over residues 512 to 524 (ETPPKPPDAPPLG) the composition is skewed to pro residues.

It belongs to the RETREG family. As to quaternary structure, interacts with ATG8 family modifier proteins MAP1LC3A, MAP1LC3B, MAP1LC3C, GABARAP, GABARAPL1 and GABARAPL2. Shows higher affinity for GABARAPL1 than for MAP1LC3B. Interacts with CANX.

The protein localises to the endoplasmic reticulum membrane. Its function is as follows. Endoplasmic reticulum (ER)-anchored autophagy regulator which exists in an inactive state under basal conditions but is activated following cellular stress. When activated, induces ER fragmentation and mediates ER delivery into lysosomes through sequestration into autophagosomes via interaction with ATG8 family proteins. Required for collagen quality control in a LIR motif-independent manner. In Homo sapiens (Human), this protein is Reticulophagy regulator 2.